A 949-amino-acid chain; its full sequence is Protein translocase subunit SecA (949 aa).

Residues Gln-87, 105-109, and Asp-524 each bind ATP; that span reads GEGKT. Disordered stretches follow at residues 852–876 and 896–939; these read PPPG…SSGG and LEFS…GSGK. Residues Cys-933, Cys-935, Cys-944, and His-945 each contribute to the Zn(2+) site.

The protein belongs to the SecA family. Monomer and homodimer. Part of the essential Sec protein translocation apparatus which comprises SecA, SecYEG and auxiliary proteins SecDF-YajC and YidC. Requires Zn(2+) as cofactor.

Its subcellular location is the cell inner membrane. It localises to the cytoplasm. It catalyses the reaction ATP + H2O + cellular proteinSide 1 = ADP + phosphate + cellular proteinSide 2.. Its function is as follows. Part of the Sec protein translocase complex. Interacts with the SecYEG preprotein conducting channel. Has a central role in coupling the hydrolysis of ATP to the transfer of proteins into and across the cell membrane, serving both as a receptor for the preprotein-SecB complex and as an ATP-driven molecular motor driving the stepwise translocation of polypeptide chains across the membrane. The protein is Protein translocase subunit SecA of Methylocella silvestris (strain DSM 15510 / CIP 108128 / LMG 27833 / NCIMB 13906 / BL2).